Here is a 230-residue protein sequence, read N- to C-terminus: 2,3-bisphosphoglycerate-dependent phosphoglycerate mutase (230 aa).

Residues 8-15 (RHGESEWN), 21-22 (TG), Arg60, 87-90 (ERHY), Lys98, 114-115 (RR), and 183-184 (GN) each bind substrate. His9 serves as the catalytic Tele-phosphohistidine intermediate. Glu87 functions as the Proton donor/acceptor in the catalytic mechanism.

The protein belongs to the phosphoglycerate mutase family. BPG-dependent PGAM subfamily.

The catalysed reaction is (2R)-2-phosphoglycerate = (2R)-3-phosphoglycerate. Its pathway is carbohydrate degradation; glycolysis; pyruvate from D-glyceraldehyde 3-phosphate: step 3/5. Functionally, catalyzes the interconversion of 2-phosphoglycerate and 3-phosphoglycerate. The protein is 2,3-bisphosphoglycerate-dependent phosphoglycerate mutase of Streptococcus mutans serotype c (strain ATCC 700610 / UA159).